Consider the following 654-residue polypeptide: Bifunctional 3'-phosphoadenosine 5'-phosphosulfate synthase pps-1 (654 aa).

Residues 1–26 are disordered; sequence MLTPRDENNEGDAMPMLKKPRYSSLS. The interval 1-231 is adenylyl-sulfate kinase; the sequence is MLTPRDENNE…VLDHLESKGL (231 aa). Residue 66 to 71 participates in ATP binding; it reads GAGKTT. Adenosine 5'-phosphosulfate contacts are provided by residues 93-96, F105, 110-113, 136-137, K175, and 190-191; these read DNIR, RQEN, IS, and GF. ATP is bound by residues C218, 449–452, 550–554, and A592; these read QLRN and GRDPA. The interval 242-653 is sulfate adenylyltransferase; the sequence is VRELFVSDDL…AGYYKSLQNS (412 aa).

In the N-terminal section; belongs to the APS kinase family. It in the C-terminal section; belongs to the sulfate adenylyltransferase family.

Its subcellular location is the nucleus. The catalysed reaction is sulfate + ATP + H(+) = adenosine 5'-phosphosulfate + diphosphate. It catalyses the reaction adenosine 5'-phosphosulfate + ATP = 3'-phosphoadenylyl sulfate + ADP + H(+). Its pathway is sulfur metabolism; sulfate assimilation. In terms of biological role, bifunctional enzyme with both ATP sulfurylase and APS kinase activity, which mediates two steps in the sulfate activation pathway. The first step is the transfer of a sulfate group to ATP to yield adenosine 5'-phosphosulfate (APS), and the second step is the transfer of a phosphate group from ATP to APS yielding 3'-phosphoadenylylsulfate (PAPS: activated sulfate donor used by sulfotransferase). Required for normal growth and development. Involved in several aspects of both embryonic and postembryonic development, including molting, changes in cell shape, and patterning of epithelial and muscle cells. The chain is Bifunctional 3'-phosphoadenosine 5'-phosphosulfate synthase pps-1 from Caenorhabditis elegans.